The primary structure comprises 320 residues: Cell division protein FtsQ (320 aa).

Positions 1-24 (MAQTIKRGGKGVRRATAARSAQRK) are disordered. The Cytoplasmic portion of the chain corresponds to 1–52 (MAQTIKRGGKGVRRATAARSAQRKVQTARQQTGSVLDSVLRWLPFSEETLHR). The helical transmembrane segment at 53–73 (ILMTLILAAAAGLVWTVAVMA) threads the bilayer. The Periplasmic segment spans residues 74–320 (GIPALVSEQA…RAASAKSDEG (247 aa)). One can recognise a POTRA domain in the interval 92 to 160 (FKVSHLEVRG…DTLVIDIVER (69 aa)). The interval 296–320 (AAEKRAEEQARAEAKRAASAKSDEG) is disordered.

The protein belongs to the FtsQ/DivIB family. FtsQ subfamily.

It is found in the cell inner membrane. Essential cell division protein. In Novosphingobium aromaticivorans (strain ATCC 700278 / DSM 12444 / CCUG 56034 / CIP 105152 / NBRC 16084 / F199), this protein is Cell division protein FtsQ.